We begin with the raw amino-acid sequence, 217 residues long: tRNA (guanine-N(7)-)-methyltransferase (217 aa).

The S-adenosyl-L-methionine site is built by Glu-48, Glu-73, Asn-100, and Asp-123. Residue Asp-123 is part of the active site. Substrate contacts are provided by Lys-127 and Asp-159.

This sequence belongs to the class I-like SAM-binding methyltransferase superfamily. TrmB family.

The catalysed reaction is guanosine(46) in tRNA + S-adenosyl-L-methionine = N(7)-methylguanosine(46) in tRNA + S-adenosyl-L-homocysteine. The protein operates within tRNA modification; N(7)-methylguanine-tRNA biosynthesis. Its function is as follows. Catalyzes the formation of N(7)-methylguanine at position 46 (m7G46) in tRNA. The chain is tRNA (guanine-N(7)-)-methyltransferase from Leptospira interrogans serogroup Icterohaemorrhagiae serovar Lai (strain 56601).